A 421-amino-acid chain; its full sequence is PDZ and LIM domain protein 7 (421 aa).

The 85-residue stretch at 1-85 (MEEYKVTLDG…KLGLVLSRFA (85 aa)) folds into the PDZ domain. Residues 115-193 (IARPFGSGTP…STGPAVRPPW (79 aa)) are disordered. The segment covering 147–172 (YPSSQMPQGQLQNGQKSRTVSNVSGK) has biased composition (polar residues). LIM zinc-binding domains follow at residues 244 to 302 (PVCS…ARFA), 303 to 362 (PNCA…MFGT), and 363 to 421 (KCRG…FSNV).

The protein resides in the cytoplasm. The protein localises to the cytoskeleton. In terms of biological role, may function as a scaffold on which the coordinated assembly of proteins can occur. May play a role as an adapter that, via its PDZ domain, localizes LIM-binding proteins to actin filaments of both skeletal muscle and nonmuscle tissues. This Xenopus laevis (African clawed frog) protein is PDZ and LIM domain protein 7 (pdlim7).